Consider the following 67-residue polypeptide: Envelope small membrane protein (67 aa).

G2 is lipidated: N-myristoyl glycine; by host. The interval 2–15 (GLVWSLISNSIQTI) is endoplasmic reticulum retention signal. The Virion surface portion of the chain corresponds to 2 to 27 (GLVWSLISNSIQTIIADFAISVIDAA). Residues 28–48 (LFFLMLLALAVVTVFLFWLIV) traverse the membrane as a helical segment. Residues 49–67 (AIGRSLVARCSRGARYRPV) are Intravirion-facing.

It belongs to the arteriviridae E protein family. Homomultimer. Associates with itself into higher-order structures, including dimers, trimers and tetramers. Associates with the GP2b-GP3-GP4 complex. In terms of processing, myristoylated. Not glycosylated.

The protein localises to the virion membrane. Its subcellular location is the host endoplasmic reticulum membrane. The protein resides in the host Golgi apparatus membrane. It is found in the secreted. Minor envelope protein. May function as a viroporin in the virion envelope that facilitates uncoating of the virus in order to release the genomic RNA into the cytoplasm for subsequent replication. This chain is Envelope small membrane protein (GP2a), found in Equidae (horses).